The following is a 334-amino-acid chain: Holliday junction branch migration complex subunit RuvB (334 aa).

Residues 1–181 form a large ATPase domain (RuvB-L) region; it reads MSEFLTPERT…GIILELDFYT (181 aa). The ADP site is built by leucine 19 and arginine 20. Residues glutamate 26, phenylalanine 27, and isoleucine 28 each coordinate ATP. Phenylalanine 27, isoleucine 28, glycine 61, leucine 62, glycine 63, lysine 64, threonine 65, and threonine 66 together coordinate ADP. Residues leucine 62 and glycine 63 each contribute to the ATP site. Residues 127–129 and arginine 170 each bind ATP; that span reads EDF. Residues tyrosine 180, proline 216, and arginine 217 each coordinate ADP. Residues 182-255 form a small ATPAse domain (RuvB-S) region; that stretch reads VKELKEIIKR…TMEVLNIDDE (74 aa). Residue proline 216 participates in ATP binding. The head domain (RuvB-H) stretch occupies residues 256–334; the sequence is GLDEFDRKIL…KYEVPENRLF (79 aa). Positions 309 and 314 each coordinate DNA.

This sequence belongs to the RuvB family. Homohexamer. Forms an RuvA(8)-RuvB(12)-Holliday junction (HJ) complex. HJ DNA is sandwiched between 2 RuvA tetramers; dsDNA enters through RuvA and exits via RuvB. An RuvB hexamer assembles on each DNA strand where it exits the tetramer. Each RuvB hexamer is contacted by two RuvA subunits (via domain III) on 2 adjacent RuvB subunits; this complex drives branch migration. In the full resolvosome a probable DNA-RuvA(4)-RuvB(12)-RuvC(2) complex forms which resolves the HJ.

The protein localises to the cytoplasm. It carries out the reaction ATP + H2O = ADP + phosphate + H(+). Functionally, the RuvA-RuvB-RuvC complex processes Holliday junction (HJ) DNA during genetic recombination and DNA repair, while the RuvA-RuvB complex plays an important role in the rescue of blocked DNA replication forks via replication fork reversal (RFR). RuvA specifically binds to HJ cruciform DNA, conferring on it an open structure. The RuvB hexamer acts as an ATP-dependent pump, pulling dsDNA into and through the RuvAB complex. RuvB forms 2 homohexamers on either side of HJ DNA bound by 1 or 2 RuvA tetramers; 4 subunits per hexamer contact DNA at a time. Coordinated motions by a converter formed by DNA-disengaged RuvB subunits stimulates ATP hydrolysis and nucleotide exchange. Immobilization of the converter enables RuvB to convert the ATP-contained energy into a lever motion, pulling 2 nucleotides of DNA out of the RuvA tetramer per ATP hydrolyzed, thus driving DNA branch migration. The RuvB motors rotate together with the DNA substrate, which together with the progressing nucleotide cycle form the mechanistic basis for DNA recombination by continuous HJ branch migration. Branch migration allows RuvC to scan DNA until it finds its consensus sequence, where it cleaves and resolves cruciform DNA. Promotes Holliday junction (HJ) branch migration in conjunction with RuvA. Subunits can be free, ADP- or ATP-bound; nucleotide binding changes during the reaction cycle. Has a DNA-dependent ATPase activity; dsDNA and supercoiled DNA but not ssDNA stimulate activity. The polypeptide is Holliday junction branch migration complex subunit RuvB (Thermotoga maritima (strain ATCC 43589 / DSM 3109 / JCM 10099 / NBRC 100826 / MSB8)).